The primary structure comprises 306 residues: Secreted RxLR effector protein 76 (306 aa).

The signal sequence occupies residues 1-21 (MSGAFYVFTALLLVASDQIAA). The short motif at 48–65 (RFLRGSRDEPDNLANEER) is the RxLR-dEER element. The segment at 105–142 (AAKAVKKRPRGAKAGRKMPRAAEAEAVKKVPRAGTAVK) is disordered. Positions 107–123 (KAVKKRPRGAKAGRKMP) are enriched in basic residues.

The protein belongs to the RxLR effector family.

It localises to the secreted. The protein resides in the host nucleus. Its function is as follows. Secreted effector that partially suppresses the host cell death induced by cell death-inducing proteins. This chain is Secreted RxLR effector protein 76, found in Plasmopara viticola (Downy mildew of grapevine).